An 83-amino-acid polypeptide reads, in one-letter code: UPF0457 protein YnzG (83 aa).

The protein belongs to the UPF0457 family.

The sequence is that of UPF0457 protein YnzG (ynzG) from Bacillus subtilis (strain 168).